The chain runs to 2173 residues: Mediator of DNA damage checkpoint protein 1 (2173 aa).

Residues 1–19 (MEDTQAIDWDVEEEEETEQ) show a composition bias toward acidic residues. The disordered stretch occupies residues 1 to 22 (MEDTQAIDWDVEEEEETEQSSE). Residues 1 to 150 (MEDTQAIDWD…SRGPLTVEET (150 aa)) form an interaction with CHEK2 region. Residues 2 to 222 (EDTQAIDWDV…PFAFNLNSDT (221 aa)) are interaction with the MRN complex. A Phosphothreonine modification is found at threonine 4. The FHA domain maps to 54–105 (NVVGRMPDCSVALPFPSISKQHAEIEILAWDKAPILRDCGSLNGTQILRPPK). A Phosphoserine modification is found at serine 108. Positions 145-570 (LTVEETPRVQ…PAKLLVVSLE (426 aa)) are required for nuclear localization (NLS1). Residue threonine 146 is modified to Phosphothreonine. Residues serine 168, serine 176, serine 198, and serine 220 each carry the phosphoserine modification. Positions 198 to 320 (SDEEGHSPVL…PPGRPAEVHL (123 aa)) are disordered. Threonine 222 is subject to Phosphothreonine. Residues 227–244 (GQQSATEEASSAARRGAT) show a composition bias toward low complexity. The segment covering 259–276 (QLEKDQPSVKERDNDTKV) has biased composition (basic and acidic residues). Serine 301 is subject to Phosphoserine. The residue at position 303 (threonine 303) is a Phosphothreonine. Basic and acidic residues predominate over residues 308 to 320 (DSRPPGRPAEVHL). Serine 331 carries the post-translational modification Phosphoserine. Threonine 333 is subject to Phosphothreonine. Positions 359–383 (GTRGPGAPGLSHLQESQAGSDTDVE) are disordered. Serine 374 and serine 378 each carry phosphoserine. Position 380 is a phosphothreonine (threonine 380). Residues serine 396, serine 399, and serine 404 each carry the phosphoserine modification. Threonine 406 carries the post-translational modification Phosphothreonine. Residue serine 413 is modified to Phosphoserine. The segment at 444–515 (LQRSQTTTGR…SSPGIHLERS (72 aa)) is disordered. Threonine 451 is subject to Phosphothreonine. A Phosphoserine modification is found at serine 455. Threonine 457 is subject to Phosphothreonine. Residues serine 487, serine 497, serine 500, serine 506, serine 507, and serine 515 each carry the phosphoserine modification. Threonine 525 carries the phosphothreonine modification. Phosphoserine is present on serine 592. Lysine 618 is covalently cross-linked (Glycyl lysine isopeptide (Lys-Gly) (interchain with G-Cter in SUMO1); alternate). Lysine 618 participates in a covalent cross-link: Glycyl lysine isopeptide (Lys-Gly) (interchain with G-Cter in SUMO2); alternate. Residue serine 631 is modified to Phosphoserine. Disordered stretches follow at residues 652–697 (VDTD…EDPD) and 773–1770 (HLEA…TLRS). Residues 673 to 687 (GREREQHVGRTKDSE) are compositionally biased toward basic and acidic residues. The segment covering 688 to 697 (DNCDDSEDPD) has biased composition (acidic residues). Phosphoserine is present on residues serine 782 and serine 795. Lysine 814 is modified (N6-acetyllysine). Composition is skewed to basic and acidic residues over residues 821 to 846 (ETAE…ERQT), 853 to 864 (ELTRGIQDREQK), 870 to 903 (DTQR…KEIQ), and 916 to 953 (AFER…RGEP). 5 positions are modified to phosphoserine: serine 957, serine 1000, serine 1035, serine 1070, and serine 1088. Residues 957-969 (SQDQKGQASSPTS) are compositionally biased toward polar residues. Over residues 1079 to 1090 (TIRKTGQDRSQE) the composition is skewed to basic and acidic residues. Over residues 1105–1115 (PKPKIITRKSS) the composition is skewed to basic residues. Residues 1131-1156 (PSTSTAQPVTPKPTSQATRSRTNRSS) are compositionally biased toward polar residues. Positions 1150–1694 (SRTNRSSVKT…KNRSSVKTPE (545 aa)) are interaction with the PRKDC complex. The segment covering 1157-1169 (VKTPEPVVPTVPE) has biased composition (low complexity). At threonine 1159 the chain carries Phosphothreonine. Positions 1171 to 1189 (QPSTSTDQPVASEPTSQAT) are enriched in polar residues. The residue at position 1200 (threonine 1200) is a Phosphothreonine. Serine 1237 is subject to Phosphoserine. Threonine 1241, threonine 1282, and threonine 1304 each carry phosphothreonine. Over residues 1280 to 1292 (VKTPEPVVPTVPE) the composition is skewed to low complexity. Over residues 1294–1320 (QPSTSTDQPVTSEPTSQATRGRTNRSS) the composition is skewed to polar residues. The span at 1321-1333 (VKTPEPVVPTVPE) shows a compositional bias: low complexity. Residues 1335–1353 (QPSTSTDQPVASEPTSQAT) show a composition bias toward polar residues. The segment covering 1390–1402 (TSRTTRSRTNMSS) has biased composition (low complexity). Composition is skewed to polar residues over residues 1418–1434 (PSTS…TYQP), 1456–1487 (KLQS…SVKS), 1499–1527 (QPST…SSVK), and 1540–1559 (QPST…QATR). Residues serine 1483 and serine 1484 each carry the phosphoserine modification. At lysine 1486 the chain carries N6-acetyllysine. A phosphothreonine mark is found at threonine 1509 and threonine 1550. The span at 1567-1578 (VKTPKIVVPTVP) shows a compositional bias: low complexity. Polar residues predominate over residues 1581-1598 (QASTSTDQPVTSEPTSRT). Threonine 1617 and threonine 1632 each carry phosphothreonine. The segment covering 1626–1639 (STDQPITPKPTSRA) has biased composition (polar residues). Serine 1648 is modified (phosphoserine). Phosphothreonine is present on residues threonine 1651 and threonine 1673. Positions 1664–1680 (PSTSRSQLVTPEPTSRA) are enriched in polar residues. Serine 1688 is subject to Phosphoserine. Phosphothreonine is present on residues threonine 1692, threonine 1714, threonine 1748, and threonine 1755. Residues 1705–1721 (PTTSTDQPVTPKPTSRA) are compositionally biased toward polar residues. Over residues 1761–1770 (QGSQSKTLRS) the composition is skewed to polar residues. Serine 1765 carries the post-translational modification Phosphoserine. A Phosphothreonine modification is found at threonine 1781. A required for nuclear localization (NLS2) region spans residues 1782–2173 (PEFQSPVTTD…VLSPLEMSST (392 aa)). Phosphoserine is present on residues serine 1786 and serine 1795. Residues 1809–1971 (RATGNPGSLT…NRSLRRTKLN (163 aa)) form a disordered region. Lysine 1824 is covalently cross-linked (Glycyl lysine isopeptide (Lys-Gly) (interchain with G-Cter in SUMO2)). Residue serine 1859 is modified to Phosphoserine. A Glycyl lysine isopeptide (Lys-Gly) (interchain with G-Cter in SUMO2) cross-link involves residue lysine 1874. The residue at position 1884 (threonine 1884) is a Phosphothreonine. Serine 1904 is modified (phosphoserine). Over residues 1907–1920 (HQKQPQRGEVSQKT) the composition is skewed to polar residues. Residue lysine 1924 forms a Glycyl lysine isopeptide (Lys-Gly) (interchain with G-Cter in SUMO1); alternate linkage. Residue lysine 1924 forms a Glycyl lysine isopeptide (Lys-Gly) (interchain with G-Cter in SUMO2); alternate linkage. Over residues 1931-1941 (AEKPGKEEDVM) the composition is skewed to basic and acidic residues. Threonine 1942 carries the post-translational modification Phosphothreonine. 2 BRCT domains span residues 1976 to 2054 (APKV…EYVV) and 2075 to 2166 (RERR…FVLS). Residue arginine 2027 is modified to Omega-N-methylarginine.

As to quaternary structure, homodimer. Interacts with H2AX, which requires phosphorylation of H2AX on 'Ser-139'. Interacts with the MRN complex, composed of MRE11, RAD50, and NBN. Interacts with CHEK2, which requires ATM-mediated phosphorylation of 'Thr-68' within the FHA domain of CHEK2. Interacts constitutively with the BRCA1-BARD1 complex, SMC1A and TP53BP1. Interacts with ATM and FANCD2, and these interactions are reduced upon DNA damage. Also interacts with the PRKDC complex, composed of XRCC6/KU70, XRCC5/KU80 and PRKDC/XRCC7. This interaction may be required for PRKDC autophosphorylation, which is essential for DNA double strand break (DSB) repair. When phosphorylated by ATM, interacts with RNF8 (via FHA domain). Interacts with CEP164. When phosphorylated, interacts with APTX (via FHA-like domain). Interacts (when phosphorylated) with TOPBP1; promoting TOPBP1 localization to DNA damage sites during mitosis. Interacts (when phosphorylated) with NBN; promoting NBN and MRN complex localization to DNA damage sites. Post-translationally, phosphorylated upon exposure to ionizing radiation (IR), ultraviolet radiation (UV), and hydroxyurea (HU). Phosphorylation in response to IR requires ATM, NBN, and possibly CHEK2. Also phosphorylated during the G2/M phase of the cell cycle and during activation of the mitotic spindle checkpoint. Phosphorylation at Thr-4 by ATM stabilizes and enhances homodimerization via the FHA domain. Phosphorylated at Ser-168 and Ser-198 by CK2 in response to DNA damage during mitosis, promoting interaction with TOPBP1. Phosphorylated by CK2 in response to DNA damage, promoting interaction with NBN and recruitment of the MRN complex to DNA damage sites. Sumoylation at Lys-1924 by PIAS4 following DNA damage promotes ubiquitin-mediated degradation. In terms of processing, ubiquitinated by RNF4, leading to proteasomal degradation; undergoes 'Lys-48'-linked polyubiquitination.

Its subcellular location is the nucleus. It localises to the chromosome. Its function is as follows. Histone reader protein required for checkpoint-mediated cell cycle arrest in response to DNA damage within both the S phase and G2/M phases of the cell cycle. Specifically recognizes and binds histone H2AX phosphorylated at 'Ser-139', a marker of DNA damage, serving as a scaffold for the recruitment of DNA repair and signal transduction proteins to discrete foci of DNA damage sites. Also required for downstream events subsequent to the recruitment of these proteins. These include phosphorylation and activation of the ATM, CHEK1 and CHEK2 kinases, and stabilization of TP53/p53 and apoptosis. ATM and CHEK2 may also be activated independently by a parallel pathway mediated by TP53BP1. Required for chromosomal stability during mitosis by promoting recruitment of TOPBP1 to DNA double strand breaks (DSBs): TOPBP1 forms filamentous assemblies that bridge MDC1 and tether broken chromosomes during mitosis. Required for the repair of DSBs via homologous recombination by promoting recruitment of NBN component of the MRN complex to DSBs. The chain is Mediator of DNA damage checkpoint protein 1 (MDC1) from Macaca mulatta (Rhesus macaque).